Consider the following 78-residue polypeptide: MAYVITEPCIGTKDASCVEVCPVDCIHEGEDQYYIDPDVCIDCGACEAVCPVSAIYHEDFVPEEWKSYIQKNRDFFKK.

2 4Fe-4S ferredoxin-type domains span residues 2 to 29 (AYVI…IHEG) and 31 to 60 (DQYY…HEDF). [3Fe-4S] cluster is bound by residues C9 and C17. [4Fe-4S] cluster is bound by residues C21, C40, C43, and C46. C50 contributes to the [3Fe-4S] cluster binding site.

Monomer. It depends on [4Fe-4S] cluster as a cofactor. [3Fe-4S] cluster serves as cofactor.

The protein is Ferredoxin 7Fe (fdxA) of Hydrogenibacillus schlegelii (Bacillus schlegelii).